We begin with the raw amino-acid sequence, 662 residues long: Transketolase (662 aa).

Substrate is bound at residue histidine 28. Residues histidine 68 and 115 to 117 contribute to the thiamine diphosphate site; that span reads GPL. Residue aspartate 156 coordinates Mg(2+). Residues glycine 157 and asparagine 186 each coordinate thiamine diphosphate. Asparagine 186 and isoleucine 188 together coordinate Mg(2+). Residues histidine 261, arginine 356, and serine 383 each contribute to the substrate site. Histidine 261 contributes to the thiamine diphosphate binding site. The active-site Proton donor is glutamate 410. Phenylalanine 436 contacts thiamine diphosphate. The substrate site is built by histidine 460, aspartate 468, and arginine 519.

It belongs to the transketolase family. As to quaternary structure, homodimer. Mg(2+) serves as cofactor. It depends on Ca(2+) as a cofactor. The cofactor is Mn(2+). Co(2+) is required as a cofactor. Requires thiamine diphosphate as cofactor.

It carries out the reaction D-sedoheptulose 7-phosphate + D-glyceraldehyde 3-phosphate = aldehydo-D-ribose 5-phosphate + D-xylulose 5-phosphate. Its pathway is carbohydrate biosynthesis; Calvin cycle. It functions in the pathway carbohydrate degradation; pentose phosphate pathway. In terms of biological role, catalyzes the transfer of a two-carbon ketol group from a ketose donor to an aldose acceptor, via a covalent intermediate with the cofactor thiamine pyrophosphate. The chain is Transketolase (tkt) from Staphylococcus aureus (strain COL).